We begin with the raw amino-acid sequence, 21 residues long: Bombinin-H4 (21 aa).

Ile2 bears the D-allo-isoleucine mark. Ile20 carries the isoleucine amide modification.

Belongs to the bombinin family. Expressed by the skin glands.

The protein localises to the secreted. In terms of biological role, has antimicrobial and hemolytic activities. The polypeptide is Bombinin-H4 (Bombina variegata (Yellow-bellied toad)).